The following is a 448-amino-acid chain: High mobility group B protein 15 (448 aa).

Positions V29–F120 constitute an ARID domain. Positions P219–P236 are enriched in polar residues. Disordered stretches follow at residues P219–Y270, K333–Q352, and V366–N448. The segment covering T244–I255 has biased composition (basic residues). Positions P263 to R330 form a DNA-binding region, HMG box. Acidic residues predominate over residues S389–E398. The span at P399–P412 shows a compositional bias: low complexity.

Belongs to the HMGB family.

It localises to the nucleus. Its function is as follows. Binds preferentially DNA with A/T-rich content. This is High mobility group B protein 15 (HMGB15) from Arabidopsis thaliana (Mouse-ear cress).